Reading from the N-terminus, the 147-residue chain is Lysozyme C (147 aa).

The N-terminal stretch at 1 to 18 is a signal peptide; sequence MKALVILGFLFLSVAVQG. The region spanning 19–147 is the C-type lysozyme domain; that stretch reads KVFERCELAR…VSSYVEGCTL (129 aa). Cystine bridges form between cysteine 24–cysteine 145, cysteine 48–cysteine 133, cysteine 83–cysteine 99, and cysteine 95–cysteine 113. Residues glutamate 53 and aspartate 71 contribute to the active site.

This sequence belongs to the glycosyl hydrolase 22 family. Monomer. As to expression, stomach-specific.

The enzyme catalyses Hydrolysis of (1-&gt;4)-beta-linkages between N-acetylmuramic acid and N-acetyl-D-glucosamine residues in a peptidoglycan and between N-acetyl-D-glucosamine residues in chitodextrins.. Functionally, lysozymes have primarily a bacteriolytic function; those in tissues and body fluids are associated with the monocyte-macrophage system and enhance the activity of immunoagents. This Bos taurus (Bovine) protein is Lysozyme C (LYZ1).